A 250-amino-acid chain; its full sequence is Ubiquinone/menaquinone biosynthesis C-methyltransferase UbiE (250 aa).

S-adenosyl-L-methionine-binding positions include Thr-73, Asp-94, 122–123, and Ser-139; that span reads NA.

The protein belongs to the class I-like SAM-binding methyltransferase superfamily. MenG/UbiE family.

It carries out the reaction a 2-demethylmenaquinol + S-adenosyl-L-methionine = a menaquinol + S-adenosyl-L-homocysteine + H(+). It catalyses the reaction a 2-methoxy-6-(all-trans-polyprenyl)benzene-1,4-diol + S-adenosyl-L-methionine = a 5-methoxy-2-methyl-3-(all-trans-polyprenyl)benzene-1,4-diol + S-adenosyl-L-homocysteine + H(+). It functions in the pathway quinol/quinone metabolism; menaquinone biosynthesis; menaquinol from 1,4-dihydroxy-2-naphthoate: step 2/2. The protein operates within cofactor biosynthesis; ubiquinone biosynthesis. In terms of biological role, methyltransferase required for the conversion of demethylmenaquinol (DMKH2) to menaquinol (MKH2) and the conversion of 2-polyprenyl-6-methoxy-1,4-benzoquinol (DDMQH2) to 2-polyprenyl-3-methyl-6-methoxy-1,4-benzoquinol (DMQH2). This Francisella tularensis subsp. novicida (strain U112) protein is Ubiquinone/menaquinone biosynthesis C-methyltransferase UbiE.